The following is a 238-amino-acid chain: DNA repair protein RAD59 (238 aa).

This sequence belongs to the RAD52 family. In terms of assembly, interacts with RAD51 and RAD52.

It localises to the nucleus. Its function is as follows. Involved in the repair of double-strand breaks in DNA during vegetative growth via recombination and single-strand annealing. Anneals complementary single-stranded DNA. In Saccharomyces cerevisiae (strain ATCC 204508 / S288c) (Baker's yeast), this protein is DNA repair protein RAD59 (RAD59).